A 1706-amino-acid chain; its full sequence is MQQSHQAGYANAADRESGIPAAVLDGIKAVAKEKNATLMFRLVNPHSTSLIAEGVATKGLGVHAKSSDWGLQAGYIPVNPNLSKLFGRAPEVIARADNDVNSSLAHGHTAVDLTLSKERLDYLRQAGLVTGMADGVVASNHAGYEQFEFRVKETSDGRYAVQYRRKGGDDFEAVKVIGNAAGIPLTADIDMFAIMPHLSNFRDSARSSVTSGDSVTDYLARTRRAASEATGGLDRERIDLLWKIARAGARSAVGTEARRQFRYDGDMNIGVITDFELEVRNALNRRAHAVGAQDVVQHGTEQNNPFPEADEKIFVVSATGESQMLTRGQLKEYIGQQRGEGYVFYENRAYGVAGKSLFDDGLGAAPGVPSGRSKFSPDVLETVPASPGLRRPSLGAVERQDSGYDSLDGVGSRSFSLGEVSDMAAVEAAELEMTRQVLHAGARQDDAEPGVSGASAHWGQRALQGAQAVAAAQRLVHAIALMTQFGRAGSTNTPQEAASLSAAVFGLGEASSAVAETVSGFFRGSSRWAGGFGVAGGAMALGGGIAAAVGAGMSLTDDAPAGQKAAAGAEIALQLTGGTVELASSIALALAAARGVTSGLQVAGASAGAAAGALAAALSPMEIYGLVQQSHYADQLDKLAQESSAYGYEGDALLAQLYRDKTAAEGAVAGVSAVLSTVGAAVSIAAAASVVGAPVAVVTSLLTGALNGILRGVQQPIIEKLANDYARKIDELGGPQAYFEKNLQARHEQLANSDGLRKMLADLQAGWNASSVIGVQTTEISKSALELAAITGNADNLKSVDVFVDRFVQGERVAGQPVVLDVAAGGIDIASRKGERPALTFITPLAAPGEEQRRRTKTGKSEFTTFVEIVGKQDRWRIRDGAADTTIDLAKVVSQLVDANGVLKHSIKLDVIGGDGDDVVLANASRIHYDGGAGTNTVSYAALGRQDSITVSADGERFNVRKQLNNANVYREGVATQTTAYGKRTENVQYRHVELARVGQLVEVDTLEHVQHIIGGAGNDSITGNAHDNFLAGGSGDDRLDGGAGNDTLVGGEGQNTVIGGAGDDVFLQDLGVWSNQLDGGAGVDTVKYNVHQPSEERLERMGDTGIHADLQKGTVEKWPALNLFSVDHVKNIENLHGSRLNDRIAGDDQDNELWGHDGNDTIRGRGGDDILRGGLGLDTLYGEDGNDIFLQDDETVSDDIDGGAGLDTVDYSAMIHPGRIVAPHEYGFGIEADLSREWVRKASALGVDYYDNVRNVENVIGTSMKDVLIGDAQANTLMGQGGDDTVRGGDGDDLLFGGDGNDMLYGDAGNDTLYGGLGDDTLEGGAGNDWFGQTQAREHDVLRGGDGVDTVDYSQTGAHAGIAAGRIGLGILADLGAGRVDKLGEAGSSAYDTVSGIENVVGTELADRITGDAQANVLRGAGGADVLAGGEGDDVLLGGDGDDQLSGDAGRDRLYGEAGDDWFFQDAANAGNLLDGGDGRDTVDFSGPGRGLDAGAKGVFLSLGKGFASLMDEPETSNVLRNIENAVGSARDDVLIGDAGANVLNGLAGNDVLSGGAGDDVLLGDEGSDLLSGDAGNDDLFGGQGDDTYLFGVGYGHDTIYESGGGHDTIRINAGADQLWFARQGNDLEIRILGTDDALTVHDWYRDADHRVEIIHAANQAVDQAGIEKLVEAMAQYPDPGAAAAAPPAARVPDTLMQSLAVNWR.

The a, catalytic stretch occupies residues 1 to 399; sequence MQQSHQAGYA…RRPSLGAVER (399 aa). 349–356 is a binding site for ATP; it reads AYGVAGKS. The tract at residues 383 to 405 is disordered; that stretch reads VPASPGLRRPSLGAVERQDSGYD. The interval 400-912 is b, Ala/Gly-rich; the sequence is QDSGYDSLDG…LKHSIKLDVI (513 aa). Residues 500-698 form a required for interaction with CyaC region; that stretch reads LSAAVFGLGE…SVVGAPVAVV (199 aa). N6-palmitoyl lysine attachment occurs at residues K860 and K983. The interval 913–1656 is c; sequence GGDGDDVVLA…RDADHRVEII (744 aa). 17 Hemolysin-type calcium-binding repeats span residues 1014-1031, 1032-1049, 1050-1067, 1155-1172, 1173-1190, 1279-1296, 1297-1314, 1315-1332, 1335-1352, 1411-1428, 1429-1446, 1447-1464, 1468-1484, 1537-1554, 1555-1572, 1573-1590, and 1603-1620; these read IGGAGNDSITGNAHDNFL, AGGSGDDRLDGGAGNDTL, VGGEGQNTVIGGAGDDVF, WGHDGNDTIRGRGGDDIL, RGGLGLDTLYGEDGNDIF, MGQGGDDTVRGGDGDDLL, FGGDGNDMLYGDAGNDTL, YGGLGDDTLEGGAGNDWF, TQAREHDVLRGGDGVDTV, TGDAQANVLRGAGGADVL, AGGEGDDVLLGGDGDDQL, SGDAGRDRLYGEAGDDWF, AANAGNLLDGGDGRDTV, IGDAGANVLNGLAGNDVL, SGGAGDDVLLGDEGSDLL, SGDAGNDDLFGGQGDDTY, and ESGGGHDTIRINAGADQL. The segment at 1657-1706 is d, Asp/Gly-rich; sequence HAANQAVDQAGIEKLVEAMAQYPDPGAAAAAPPAARVPDTLMQSLAVNWR.

This sequence in the N-terminal section; belongs to the adenylyl cyclase class-2 family. It in the C-terminal section; belongs to the RTX prokaryotic toxin family. Post-translationally, released in a processed form. In terms of processing, palmitoylated at Lys-860 and Lys-983 by CyaC. The toxin only becomes active when modified in position Lys-983: palmitoylation is required for efficient membrane insertion and pore formation of the acylated Hemolysin chain.

It localises to the secreted. The protein resides in the host cell membrane. The enzyme catalyses ATP = 3',5'-cyclic AMP + diphosphate. Its activity is regulated as follows. Activated by host calmodulin. Its function is as follows. Bifunctional adenylate cyclase toxin-hemolysin that plays a crucial role in host colonization. It causes whooping cough by acting on mammalian cells by elevating cAMP-concentration and thus disrupts normal cell function. Adenylate cyclase that is activated by host intracellular calmodulin and catalyzes un-regulated conversion of ATP to cAMP, thereby impairing microbicidal functions of immune effector cells and inducing apoptosis of lung macrophages. Functionally, hemolysin that forms small cation-selective membrane channels, leading to hemolytic activity. The hemolytic activity of CyaA is weak compared with that of the HlyA of E.coli. This is Bifunctional hemolysin/adenylate cyclase (cya) from Bordetella pertussis (strain Tohama I / ATCC BAA-589 / NCTC 13251).